The following is a 269-amino-acid chain: Autophagy-related protein 5 (269 aa).

Residue lysine 102 forms a Glycyl lysine isopeptide (Lys-Gly) (interchain with G-Cter in ATG12) linkage.

Belongs to the ATG5 family. In terms of assembly, conjugated with ATG12. The ATG5-ATG12 conjugate forms a complex with several units of ATG16. The ATG12-ATG5 conjugate also associates with ATG3. Post-translationally, conjugated to ATG12; which is essential for autophagy. Conjugation with ATG12 involves ATG7 as an E1-like activating enzyme and ATG10 as an E2-like conjugating enzyme.

The protein localises to the preautophagosomal structure membrane. Its function is as follows. Involved in cytoplasm to vacuole transport (Cvt) and autophagic vesicle formation. Autophagy is essential for maintenance of amino acid levels and protein synthesis under nitrogen starvation. Required for selective autophagic degradation of the nucleus (nucleophagy). Also required for mitophagy, which eliminates defective or superfluous mitochondria in order to fulfill cellular energy requirements and prevent excess ROS production. Conjugation with ATG12, through a ubiquitin-like conjugating system involving ATG7 as an E1-like activating enzyme and ATG10 as an E2-like conjugating enzyme, is essential for its function. The ATG12-ATG5 conjugate acts as an E3-like enzyme which is required for lipidation of ATG8 and ATG8 association to the vesicle membranes. ATG12-ATG5 rearranges the ATG3 catalytic center and enhances its E2 activity. Required for proper vegetative growth, asexual/sexual reproduction, but, unlike several plant and animal pathogenic fungi, where ATG5 is required for infection, in B.bassiana it is dispensable for pathogenesis. This is Autophagy-related protein 5 from Beauveria bassiana (strain ARSEF 2860) (White muscardine disease fungus).